Reading from the N-terminus, the 592-residue chain is Aspartate--tRNA ligase (592 aa).

An L-aspartate-binding site is contributed by E171. Positions 195–198 are aspartate; that stretch reads QLFK. Residue R217 participates in L-aspartate binding. Residues 217 to 219 and Q226 contribute to the ATP site; that span reads RDE. H448 contributes to the L-aspartate binding site. E482 serves as a coordination point for ATP. R489 is an L-aspartate binding site. 534–537 contributes to the ATP binding site; that stretch reads GLDR.

It belongs to the class-II aminoacyl-tRNA synthetase family. Type 1 subfamily. In terms of assembly, homodimer.

Its subcellular location is the cytoplasm. The enzyme catalyses tRNA(Asp) + L-aspartate + ATP = L-aspartyl-tRNA(Asp) + AMP + diphosphate. Its function is as follows. Catalyzes the attachment of L-aspartate to tRNA(Asp) in a two-step reaction: L-aspartate is first activated by ATP to form Asp-AMP and then transferred to the acceptor end of tRNA(Asp). The polypeptide is Aspartate--tRNA ligase (Pseudoalteromonas translucida (strain TAC 125)).